Reading from the N-terminus, the 118-residue chain is D-dopachrome decarboxylase (118 aa).

Pro2 carries the N-acetylproline modification. Lys33 carries the post-translational modification N6-acetyllysine.

This sequence belongs to the MIF family. As to quaternary structure, homotrimer.

Its subcellular location is the cytoplasm. The enzyme catalyses D-dopachrome + H(+) = 5,6-dihydroxyindole + CO2. Tautomerization of D-dopachrome with decarboxylation to give 5,6-dihydroxyindole (DHI). The chain is D-dopachrome decarboxylase (DDT) from Bos taurus (Bovine).